Reading from the N-terminus, the 75-residue chain is RNA-binding protein KhpA (75 aa).

The 47-residue stretch at 29–75 (SIILELKVSPEDMGKVIGKQGRIAKAIRTVVKAAAIKENKKVVVEII) folds into the KH domain.

Belongs to the KhpA RNA-binding protein family. As to quaternary structure, forms a complex with KhpB.

The protein resides in the cytoplasm. Functionally, a probable RNA chaperone. Forms a complex with KhpB which binds to cellular RNA and controls its expression. Plays a role in peptidoglycan (PG) homeostasis and cell length regulation. This is RNA-binding protein KhpA from Clostridium perfringens (strain 13 / Type A).